Reading from the N-terminus, the 318-residue chain is Retinol dehydrogenase 11 (318 aa).

A helical; Signal-anchor for type II membrane protein transmembrane segment spans residues 1 to 21 (MVELMFPLLLLLLPFLLYMAA). Topologically, residues 22–318 (PQIRKMLSSG…SCDLLGLPID (297 aa)) are cytoplasmic. 48–54 (GANTGIG) provides a ligand contact to NADP(+). Lysine 112 bears the N6-acetyllysine mark. Residue serine 177 coordinates substrate. Tyrosine 202 acts as the Proton acceptor in catalysis.

This sequence belongs to the short-chain dehydrogenases/reductases (SDR) family. As to quaternary structure, interacts with SELENOF. In terms of processing, not glycosylated. Predominantly expressed in the epithelial cells of prostate, in both basal and luminal secretory cell populations. Expressed at low levels in spleen, thymus, testis, ovary, small intestine, colon, peripherical blood leukocytes, kidney, adrenal gland and fetal liver. Not detected in prostatic fibromuscular stromal cells, endothelial cells, or infiltrating lymphocytes.

It localises to the endoplasmic reticulum membrane. It catalyses the reaction all-trans-retinol + NADP(+) = all-trans-retinal + NADPH + H(+). The catalysed reaction is 11-cis-retinol + NADP(+) = 11-cis-retinal + NADPH + H(+). The enzyme catalyses 9-cis-retinol + NADP(+) = 9-cis-retinal + NADPH + H(+). It carries out the reaction 13-cis-retinol + NADP(+) = 13-cis-retinal + NADPH + H(+). It participates in cofactor metabolism; retinol metabolism. With respect to regulation, SELENOF decreases the retinol dehydrogenase activity. Retinol dehydrogenase with a clear preference for NADP. Displays high activity towards 9-cis, 11-cis and all-trans-retinol, and to a lesser extent on 13-cis-retinol. Exhibits a low reductive activity towards unsaturated medium-chain aldehydes such as cis -6-nonenal and no activity toward nonanal or 4-hydroxy-nonenal. Has no dehydrogenase activity towards steroid. The polypeptide is Retinol dehydrogenase 11 (RDH11) (Homo sapiens (Human)).